Here is a 425-residue protein sequence, read N- to C-terminus: Monoacylglycerol lipase ABHD2 (425 aa).

The Cytoplasmic portion of the chain corresponds to 1–9 (MNAMMETSE). The chain crosses the membrane as a helical; Signal-anchor for type II membrane protein span at residues 10 to 30 (LPAVFDGVKLAAVAAVLYVIV). The Extracellular portion of the chain corresponds to 31–425 (RCLNLKSPTA…DTELVEADLE (395 aa)). Residues 128–382 (MVICPGIANH…HGGHLGFFEG (255 aa)) form the AB hydrolase-1 domain. N136 carries N-linked (GlcNAc...) asparagine glycosylation. Residue S207 is the Nucleophile of the active site. Active-site charge relay system residues include D345 and H376. A glycan (N-linked (GlcNAc...) asparagine) is linked at N410.

The protein belongs to the AB hydrolase superfamily. AB hydrolase 4 family.

The protein resides in the cell membrane. It catalyses the reaction Hydrolyzes glycerol monoesters of long-chain fatty acids.. The enzyme catalyses an acetyl ester + H2O = an aliphatic alcohol + acetate + H(+). It carries out the reaction a triacylglycerol + H2O = a diacylglycerol + a fatty acid + H(+). The catalysed reaction is 2-(5Z,8Z,11Z,14Z-eicosatetraenoyl)-glycerol + H2O = glycerol + (5Z,8Z,11Z,14Z)-eicosatetraenoate + H(+). It catalyses the reaction a butanoate ester + H2O = an aliphatic alcohol + butanoate + H(+). The enzyme catalyses hexadecanoate ester + H2O = an aliphatic alcohol + hexadecanoate + H(+). With respect to regulation, acylglycerol lipase activity is activated upon binding to progesterone. Progesterone-dependent acylglycerol lipase that catalyzes hydrolysis of endocannabinoid arachidonoylglycerol (AG) from cell membrane. Acts as a progesterone receptor: progesterone-binding activates the acylglycerol lipase activity, mediating degradation of 1-arachidonoylglycerol (1AG) and 2-arachidonoylglycerol (2AG) to glycerol and arachidonic acid (AA). Also displays an ester hydrolase activity against acetyl ester, butanoate ester and hexadecanoate ester. Plays a key role in sperm capacitation in response to progesterone by mediating degradation of 2AG, an inhibitor of the sperm calcium channel CatSper, leading to calcium influx via CatSper and sperm activation. May also play a role in smooth muscle cells migration. This is Monoacylglycerol lipase ABHD2 (ABHD2) from Bos taurus (Bovine).